Here is a 249-residue protein sequence, read N- to C-terminus: tRNA (guanine-N(1)-)-methyltransferase (249 aa).

Residues G113 and 133–138 (IGDYVL) each bind S-adenosyl-L-methionine.

Belongs to the RNA methyltransferase TrmD family. Homodimer.

It is found in the cytoplasm. It catalyses the reaction guanosine(37) in tRNA + S-adenosyl-L-methionine = N(1)-methylguanosine(37) in tRNA + S-adenosyl-L-homocysteine + H(+). Specifically methylates guanosine-37 in various tRNAs. The chain is tRNA (guanine-N(1)-)-methyltransferase from Aeromonas salmonicida (strain A449).